The sequence spans 184 residues: Glutathione-regulated potassium-efflux system ancillary protein KefG (184 aa).

The protein belongs to the NAD(P)H dehydrogenase (quinone) family. KefG subfamily. As to quaternary structure, interacts with KefB.

Its subcellular location is the cell inner membrane. It catalyses the reaction a quinone + NADH + H(+) = a quinol + NAD(+). The enzyme catalyses a quinone + NADPH + H(+) = a quinol + NADP(+). Regulatory subunit of a potassium efflux system that confers protection against electrophiles. Required for full activity of KefB. This chain is Glutathione-regulated potassium-efflux system ancillary protein KefG, found in Yersinia enterocolitica serotype O:8 / biotype 1B (strain NCTC 13174 / 8081).